The following is a 351-amino-acid chain: Dihydroorotate dehydrogenase (quinone) (351 aa).

FMN contacts are provided by residues 67-71 (AGFDK) and Thr91. A substrate-binding site is contributed by Lys71. Substrate is bound at residue 116–120 (NAMGF). FMN-binding residues include Asn145 and Asn178. Asn178 lines the substrate pocket. The active-site Nucleophile is the Ser181. Asn183 serves as a coordination point for substrate. FMN is bound by residues Lys214 and Thr242. 243–244 (NT) contributes to the substrate binding site. Residues Gly262, Gly291, and 312–313 (YS) contribute to the FMN site.

The protein belongs to the dihydroorotate dehydrogenase family. Type 2 subfamily. Monomer. It depends on FMN as a cofactor.

The protein localises to the cell membrane. It catalyses the reaction (S)-dihydroorotate + a quinone = orotate + a quinol. Its pathway is pyrimidine metabolism; UMP biosynthesis via de novo pathway; orotate from (S)-dihydroorotate (quinone route): step 1/1. Functionally, catalyzes the conversion of dihydroorotate to orotate with quinone as electron acceptor. The protein is Dihydroorotate dehydrogenase (quinone) of Helicobacter pylori (strain P12).